Consider the following 357-residue polypeptide: Protein RecA (357 aa).

71 to 78 (GPESSGKT) is a binding site for ATP.

Belongs to the RecA family.

It is found in the cytoplasm. In terms of biological role, can catalyze the hydrolysis of ATP in the presence of single-stranded DNA, the ATP-dependent uptake of single-stranded DNA by duplex DNA, and the ATP-dependent hybridization of homologous single-stranded DNAs. It interacts with LexA causing its activation and leading to its autocatalytic cleavage. The sequence is that of Protein RecA from Ehrlichia chaffeensis (strain ATCC CRL-10679 / Arkansas).